Consider the following 889-residue polypeptide: DNA gyrase subunit A (889 aa).

Residues 35–501 enclose the Topo IIA-type catalytic domain; the sequence is LPDVRDGLKP…GFEDLEDEDL (467 aa). The active-site O-(5'-phospho-DNA)-tyrosine intermediate is Tyr-123. The GyrA-box signature appears at 528–534; that stretch reads QNRGGRG. Residues 811-889 form a disordered region; the sequence is KEDAEDETNE…IQQSLDEDEE (79 aa). Over residues 813–823 the composition is skewed to acidic residues; sequence DAEDETNEDEQ. The segment covering 863–875 has biased composition (basic and acidic residues); sequence DGRIEVRQDFMDR. Over residues 876 to 889 the composition is skewed to acidic residues; sequence VEEDIQQSLDEDEE.

The protein belongs to the type II topoisomerase GyrA/ParC subunit family. Heterotetramer, composed of two GyrA and two GyrB chains. In the heterotetramer, GyrA contains the active site tyrosine that forms a transient covalent intermediate with DNA, while GyrB binds cofactors and catalyzes ATP hydrolysis.

Its subcellular location is the cytoplasm. The enzyme catalyses ATP-dependent breakage, passage and rejoining of double-stranded DNA.. In terms of biological role, a type II topoisomerase that negatively supercoils closed circular double-stranded (ds) DNA in an ATP-dependent manner to modulate DNA topology and maintain chromosomes in an underwound state. Negative supercoiling favors strand separation, and DNA replication, transcription, recombination and repair, all of which involve strand separation. Also able to catalyze the interconversion of other topological isomers of dsDNA rings, including catenanes and knotted rings. Type II topoisomerases break and join 2 DNA strands simultaneously in an ATP-dependent manner. The polypeptide is DNA gyrase subunit A (Staphylococcus aureus).